A 160-amino-acid polypeptide reads, in one-letter code: Cytochrome c-type biogenesis protein CcmE (160 aa).

At 1–9 the chain is on the cytoplasmic side; sequence MRGLKKKRR. Residues 10-30 form a helical; Signal-anchor for type II membrane protein membrane-spanning segment; it reads IQIIAIAAVALTIATIMIGTA. The Periplasmic portion of the chain corresponds to 31 to 160; sequence MRDGINFFRS…DGGYGGASGS (130 aa). His-123 and Tyr-127 together coordinate heme. The tract at residues 141 to 160 is disordered; it reads VYKDPNATDADGGYGGASGS.

This sequence belongs to the CcmE/CycJ family.

It localises to the cell inner membrane. Heme chaperone required for the biogenesis of c-type cytochromes. Transiently binds heme delivered by CcmC and transfers the heme to apo-cytochromes in a process facilitated by CcmF and CcmH. The sequence is that of Cytochrome c-type biogenesis protein CcmE from Dinoroseobacter shibae (strain DSM 16493 / NCIMB 14021 / DFL 12).